Here is a 515-residue protein sequence, read N- to C-terminus: Maturase K (515 aa).

It belongs to the intron maturase 2 family. MatK subfamily.

The protein resides in the plastid. It is found in the chloroplast. Its function is as follows. Usually encoded in the trnK tRNA gene intron. Probably assists in splicing its own and other chloroplast group II introns. The polypeptide is Maturase K (Pinus coulteri (Coulter pine)).